The primary structure comprises 298 residues: Probable mitochondrial 2-oxodicarboxylate carrier (298 aa).

6 helical membrane passes run 6 to 26, 62 to 81, 105 to 125, 159 to 179, 203 to 223, and 267 to 287; these read IPFP…VLTL, HRLY…KRAL, ALSI…VVPF, ALYN…AGYF, LIAG…FDVI, and VLRL…VIEF. Solcar repeat units lie at residues 6–92, 102–188, and 197–287; these read IPFP…YSKL, SSPA…IRNS, and GEIR…VIEF.

This sequence belongs to the mitochondrial carrier (TC 2.A.29) family.

Its subcellular location is the mitochondrion inner membrane. In terms of biological role, transports C5-C7 oxodicarboxylates across the inner membranes of mitochondria. The protein is Probable mitochondrial 2-oxodicarboxylate carrier of Schizosaccharomyces pombe (strain 972 / ATCC 24843) (Fission yeast).